A 68-amino-acid polypeptide reads, in one-letter code: KSLFLVLFLGMVSLSICEEEKRENEDEEKQEDDEQSEMKRGLWSTIKNVGKEAAIAAGKAVLGSLGEQ.

Positions 1–17 (KSLFLVLFLGMVSLSIC) are cleaved as a signal peptide. The propeptide occupies 18 to 38 (EEEKRENEDEEKQEDDEQSEM). The segment at 19–40 (EEKRENEDEEKQEDDEQSEMKR) is disordered. The segment covering 25 to 35 (EDEEKQEDDEQ) has biased composition (acidic residues). L65 is modified (leucine amide). Positions 67–68 (EQ) are excised as a propeptide.

Expressed by the skin glands.

The protein resides in the secreted. Functionally, has antibacterial activity against the Gram-negative bacteria E.coli ATCC 11775 (MIC=0.5 uM), and the Gram-positive bacteria S.aureus ATCC 12600 (MIC=0.5 uM) and M.luteus ATCC 49732 (MIC=2.0 uM). Does not inhibit the growth of the fungus C.albicans. Probably acts by disturbing membrane functions with its amphipathic structure. The chain is Dermaseptin-H5 from Pithecopus azureus (Orange-legged monkey tree frog).